A 1012-amino-acid polypeptide reads, in one-letter code: MTNLQDQTQQIVPFIRSLLMPTTGPASIPDDTLEKHTLRSETSTYNLTVGDTGSGLIVFFPGFPGSIVGAHYTLQSNGNYKFDQMLLTAQNLPASYNYCRLVSRSLTVRSSTLPGGVYALNGTINAVTFQGSLSELTDVSYNGLMSATANINDKIGNVLVGEGVTVLSLPTSYDLGYVRLGDPIPAIGLDPKMVATCDSSDRPRVYTITAADDYQFSSQYQPGGVTITLFSANIDAITSLSVGGELVFQTSVHGLVLGATIYLIGFDGTTVITRAVAANNGLTTGTDNLMPFNLVISTNEITQPITSIKLEIVTSKSGGQAGDQMSWSAKGSLAVTIHGGNYPGALRPVTLVAYERVATGSVVTVAGVSNFELIPNPELAKNLVTEYGRFDPGAMNYTKLILSERDRLGIKTVWPTREYTDFREYFMEVADLNSPLKIAGAFGFKDIIRAIRRIAVPVVSTLFPPAAPLAHAIGEGVDYLLGDEAQAASGTARAASGKARAASGRIRQLTLAADKGYEVVANLFQVPQNPVVDGILASPGVLRGAHNLDCVLREGATLFPVVITTVEDAMTPKALNSKMFAVIEGVREDLQPPSQRGSFIRTLSGHRVYGYAPDGVLPLETGRDYTVVPIDDVWDDSIMLSKDPIPPIVGNSGNLAIAYMDVFRPKVPIHVAMTGALNACGEIEKVSFRSTKLATAHRLGLKLAGPGAFDVNTGPNWATFIKRFPHNPRDWDRLPYLNLPYLPPNAGRQYHLAMAASEFKETPELESAVRAMEAAANVDPLFQSALSVFMWLEENGIVTDMANFALSDPNAHRMRNFLANAPQAGSKSQRAKYGTAGYGVEARGPTPEEAQREKDTRISKKMETMGIYFATPEWVALNGHRGPSPGQLKYWQNTREIPDPNEDYLDYVHAEKSRLASEEQILRAATSIYGAPGQAEPPQAFIDEVAKVYEINHGRGPNQEQMKDLLLTAMEMKHRNPRRALPKPKPKPNAPTQRPPGRLGRWIRTVSDEDLE.

D30 contacts a divalent metal cation. Positions 513–755 constitute a Peptidase S50 domain; it reads ADKGYEVVAN…AGRQYHLAMA (243 aa). S652 acts as the Nucleophile in catalysis. K692 is a catalytic residue. Positions 969-1012 are disordered; that stretch reads AMEMKHRNPRRALPKPKPKPNAPTQRPPGRLGRWIRTVSDEDLE. Residues 975–986 are compositionally biased toward basic residues; sequence RNPRRALPKPKP. An interaction with VP1 protein region spans residues 1003–1012; the sequence is IRTVSDEDLE.

Homotrimer. A central divalent metal stabilizes the VP2 trimer. Interacts with host ITGA4/ITGB1. As to quaternary structure, homodimer. Interacts (via C-terminus) with VP1 in the cytoplasm. Interacts with VP2. Post-translationally, specific enzymatic cleavages yield mature proteins. The capsid assembly seems to be regulated by polyprotein processing. The protease VP4 cleaves itself off the polyprotein, thus releasing pre-VP2 and VP3 within the infected cell. During capsid assembly, the C-terminus of pre-VP2 is further processed by VP4, giving rise to VP2, the external capsid protein and three small peptides that all stay closely associated with the capsid.

It localises to the virion. It is found in the host cytoplasm. Capsid protein VP2 self assembles to form an icosahedral capsid with a T=13 symmetry, about 70 nm in diameter, and consisting of 260 VP2 trimers. The capsid encapsulates the genomic dsRNA. VP2 is also involved in attachment and entry into the host cell by interacting with host ITGA4/ITGB1. Functionally, the precursor of VP2 plays an important role in capsid assembly. First, pre-VP2 and VP2 oligomers assemble to form a procapsid. Then, the pre-VP2 intermediates may be processed into VP2 proteins by proteolytic cleavage mediated by VP4 to obtain the mature virion. The final capsid is composed of pentamers and hexamers but VP2 has a natural tendency to assemble into all-pentameric structures. Therefore pre-VP2 may be required to allow formation of the hexameric structures. In terms of biological role, protease VP4 is a serine protease that cleaves the polyprotein into its final products. Pre-VP2 is first partially cleaved, and may be completely processed by VP4 upon capsid maturation. Its function is as follows. Capsid protein VP3 plays a key role in virion assembly by providing a scaffold for the capsid made of VP2. May self-assemble to form a T=4-like icosahedral inner-capsid composed of at least 180 trimers. Plays a role in genomic RNA packaging by recruiting VP1 into the capsid and interacting with the dsRNA genome segments to form a ribonucleoprotein complex. Additionally, the interaction of the VP3 C-terminal tail with VP1 removes the inherent structural blockade of the polymerase active site. Thus, VP3 can also function as a transcriptional activator. Structural peptide 1 is a small peptide derived from pre-VP2 C-terminus. It destabilizes and perforates cell membranes, suggesting a role during entry. Functionally, structural peptide 2 is a small peptide derived from pVP2 C-terminus. It is not essential for the virus viability, but viral growth is affected when missing. In terms of biological role, structural peptide 3 is a small peptide derived from pVP2 C-terminus. It is not essential for the virus viability, but viral growth is affected when missing. Its function is as follows. Structural peptide 4 is a small peptide derived from pVP2 C-terminus. It is essential for the virus viability. The sequence is that of Structural polyprotein from Avian infectious bursal disease virus (strain Cu-1) (IBDV).